We begin with the raw amino-acid sequence, 484 residues long: Aspartyl/glutamyl-tRNA(Asn/Gln) amidotransferase subunit B (484 aa).

Belongs to the GatB/GatE family. GatB subfamily. As to quaternary structure, heterotrimer of A, B and C subunits.

The enzyme catalyses L-glutamyl-tRNA(Gln) + L-glutamine + ATP + H2O = L-glutaminyl-tRNA(Gln) + L-glutamate + ADP + phosphate + H(+). It carries out the reaction L-aspartyl-tRNA(Asn) + L-glutamine + ATP + H2O = L-asparaginyl-tRNA(Asn) + L-glutamate + ADP + phosphate + 2 H(+). In terms of biological role, allows the formation of correctly charged Asn-tRNA(Asn) or Gln-tRNA(Gln) through the transamidation of misacylated Asp-tRNA(Asn) or Glu-tRNA(Gln) in organisms which lack either or both of asparaginyl-tRNA or glutaminyl-tRNA synthetases. The reaction takes place in the presence of glutamine and ATP through an activated phospho-Asp-tRNA(Asn) or phospho-Glu-tRNA(Gln). The chain is Aspartyl/glutamyl-tRNA(Asn/Gln) amidotransferase subunit B from Dechloromonas aromatica (strain RCB).